We begin with the raw amino-acid sequence, 314 residues long: Olfactory receptor 5F1 (314 aa).

Topologically, residues 1-25 are extracellular; sequence MTRKNYTSLTEFVLLGLADTLELQI. The N-linked (GlcNAc...) asparagine glycan is linked to Asn5. The chain crosses the membrane as a helical span at residues 26-46; the sequence is ILFLFFLVIYTLTVLGNLGMI. At 47-54 the chain is on the cytoplasmic side; sequence LLIRIDSQ. The helical transmembrane segment at 55–75 threads the bilayer; sequence LHTPMYFFLANLSFVDVCNST. Residues 76 to 99 lie on the Extracellular side of the membrane; the sequence is TITPKMLADLLSEKKTISFAGCFL. Residues Cys97 and Cys189 are joined by a disulfide bond. A helical transmembrane segment spans residues 100–120; that stretch reads QMYFFISLATTECILFGLMAY. The Cytoplasmic portion of the chain corresponds to 121–139; that stretch reads DRYAAICRPLLYSLIMSRT. A helical transmembrane segment spans residues 140 to 160; sequence VYLKMAAGAFAAGLLNFMVNT. At 161–196 the chain is on the extracellular side; that stretch reads SHVSSLSFCDSNVIHHFFCDSPPLFKLSCSDTILKE. Residues 197–217 form a helical membrane-spanning segment; that stretch reads SISSILAGVNIVGTLLVILSS. At 218–237 the chain is on the cytoplasmic side; the sequence is YSYVLFSIFSMHSGEGRHRA. Residues 238-258 form a helical membrane-spanning segment; it reads FSTCASHLTAIILFYATCIYT. At 259-271 the chain is on the extracellular side; that stretch reads YLRPSSSYSLNQD. Residues 272-292 form a helical membrane-spanning segment; it reads KVASVFYTVVIPMLNPLIYSL. Residues 293 to 314 lie on the Cytoplasmic side of the membrane; sequence RSKEVKKALANVISRKRTSSFL.

Belongs to the G-protein coupled receptor 1 family.

Its subcellular location is the cell membrane. Odorant receptor. The polypeptide is Olfactory receptor 5F1 (OR5F1) (Homo sapiens (Human)).